Consider the following 136-residue polypeptide: Large ribosomal subunit protein eL27 (136 aa).

The region spanning 5–40 (MKPGKVVMVLAGRYAGRKAVIVKNIDDGTADRPYSH) is the KOW domain.

Belongs to the eukaryotic ribosomal protein eL27 family. Component of the large ribosomal subunit.

The protein resides in the cytoplasm. Its subcellular location is the cytosol. It is found in the rough endoplasmic reticulum. Functionally, component of the large ribosomal subunit. The polypeptide is Large ribosomal subunit protein eL27 (rpl27) (Danio rerio (Zebrafish)).